A 43-amino-acid polypeptide reads, in one-letter code: Protein PsbN (43 aa).

A helical membrane pass occupies residues 7 to 29; that stretch reads IVIFVSSLLLGITTYSVYTAFGP.

Belongs to the PsbN family.

It is found in the plastid. It localises to the chloroplast thylakoid membrane. May play a role in photosystem I and II biogenesis. The protein is Protein PsbN of Phaeodactylum tricornutum (strain CCAP 1055/1).